Here is an 84-residue protein sequence, read N- to C-terminus: Large ribosomal subunit protein bL27 (84 aa).

Positions 1–25 (MAHKKGAGSTKNGRDSKPKMLGVKR) are disordered.

This sequence belongs to the bacterial ribosomal protein bL27 family.

The sequence is that of Large ribosomal subunit protein bL27 from Dehalococcoides mccartyi (strain ATCC BAA-2266 / KCTC 15142 / 195) (Dehalococcoides ethenogenes (strain 195)).